The chain runs to 599 residues: NADH-quinone oxidoreductase subunit C/D (599 aa).

The tract at residues 1–189 (MTDLTTHDLA…DPFELTKQKE (189 aa)) is NADH dehydrogenase I subunit C. Positions 213–599 (DFMFLNLGPN…IDFVMSDVDR (387 aa)) are NADH dehydrogenase I subunit D.

In the N-terminal section; belongs to the complex I 30 kDa subunit family. The protein in the C-terminal section; belongs to the complex I 49 kDa subunit family. As to quaternary structure, NDH-1 is composed of 13 different subunits. Subunits NuoB, CD, E, F, and G constitute the peripheral sector of the complex.

The protein localises to the cell inner membrane. It catalyses the reaction a quinone + NADH + 5 H(+)(in) = a quinol + NAD(+) + 4 H(+)(out). Its function is as follows. NDH-1 shuttles electrons from NADH, via FMN and iron-sulfur (Fe-S) centers, to quinones in the respiratory chain. The immediate electron acceptor for the enzyme in this species is believed to be ubiquinone. Couples the redox reaction to proton translocation (for every two electrons transferred, four hydrogen ions are translocated across the cytoplasmic membrane), and thus conserves the redox energy in a proton gradient. The polypeptide is NADH-quinone oxidoreductase subunit C/D (Pectobacterium atrosepticum (strain SCRI 1043 / ATCC BAA-672) (Erwinia carotovora subsp. atroseptica)).